Reading from the N-terminus, the 225-residue chain is NAD(P)H-quinone oxidoreductase subunit K, chloroplastic (225 aa).

4 residues coordinate [4Fe-4S] cluster: cysteine 43, cysteine 44, cysteine 108, and cysteine 139.

It belongs to the complex I 20 kDa subunit family. NDH is composed of at least 16 different subunits, 5 of which are encoded in the nucleus. It depends on [4Fe-4S] cluster as a cofactor.

It is found in the plastid. The protein resides in the chloroplast thylakoid membrane. The enzyme catalyses a plastoquinone + NADH + (n+1) H(+)(in) = a plastoquinol + NAD(+) + n H(+)(out). The catalysed reaction is a plastoquinone + NADPH + (n+1) H(+)(in) = a plastoquinol + NADP(+) + n H(+)(out). NDH shuttles electrons from NAD(P)H:plastoquinone, via FMN and iron-sulfur (Fe-S) centers, to quinones in the photosynthetic chain and possibly in a chloroplast respiratory chain. The immediate electron acceptor for the enzyme in this species is believed to be plastoquinone. Couples the redox reaction to proton translocation, and thus conserves the redox energy in a proton gradient. The polypeptide is NAD(P)H-quinone oxidoreductase subunit K, chloroplastic (Brachypodium distachyon (Purple false brome)).